A 160-amino-acid chain; its full sequence is MTDTPPFWQVRSLDEMTTEEWESLCDGCGRCCLHKLREDVTDQVLYTDVACRLLDLESCRCSDYAQRRRKVPDCVQLTPAALADIDWLPPSCAYRLLAEGQTLAWWHPLVSGSPDTVHEAGISVRGRAVSERRAGPLEHHIADWPGTMPRPRRPRIRRPA.

Belongs to the UPF0260 family.

This Gluconacetobacter diazotrophicus (strain ATCC 49037 / DSM 5601 / CCUG 37298 / CIP 103539 / LMG 7603 / PAl5) protein is UPF0260 protein GDI1595/Gdia_1801.